Consider the following 110-residue polypeptide: MAIGLNVTEPEVSCADTNCPFHGSLSVRGQTLEGTVASTDMDKTVIVEREYDVRVPKYDRLMKRRSRIPAHAPPCVDLAEGDTVRIAETRPLSKTKSHVVVEQIDTGGAE.

Belongs to the universal ribosomal protein uS17 family. As to quaternary structure, part of the 30S ribosomal subunit.

One of the primary rRNA binding proteins, it binds specifically to the 5'-end of 16S ribosomal RNA. This Haloquadratum walsbyi (strain DSM 16790 / HBSQ001) protein is Small ribosomal subunit protein uS17.